The following is a 246-amino-acid chain: Transcriptional regulatory protein LytR (246 aa).

In terms of domain architecture, Response regulatory spans 2–116; it reads KALIIDDEPL…RIEQAVNKVR (115 aa). 4-aspartylphosphate is present on aspartate 53. The 105-residue stretch at 141-245 folds into the HTH LytTR-type domain; that stretch reads LPVEIDDKIH…MKDFKASIGL (105 aa).

As to quaternary structure, homodimer; when phosphorylated. Phosphorylated and dephosphorylated by LytS.

It is found in the cytoplasm. Member of the two-component regulatory system LytR/LytS that regulates genes involved in autolysis, programmed cell death, biofilm formation and cell wall metabolism. Also participates in sensing and responding to host defense cationic antimicrobial peptides (HDPs). Upon phosphorylation by LytS, functions as a transcription regulator by direct binding to promoter regions of target genes including lrgA and lrgB, to positively regulate their expression. This Staphylococcus aureus (strain USA300) protein is Transcriptional regulatory protein LytR (lytR).